The chain runs to 416 residues: MDRINTSAAPPTSPDWERLRTDFPLLQRHVHGKPLIYFDNANTAQKPQAVITATDTFYRRHNANISRAVHTLGTEATEAYEATRTALATLLNAPTHELVLCSGTTFAINLIAYSWALPRLRAGDVILVSRMEHHANIVPWQLIAERTGARIQVADILPNGTLDLDALHTLMTPQVKLLAITHVSNVLGTVNPIHDICRQARQRGITTVVDGSQAAPHRHIDIPAIGCDFYAITGHKLYGPTGTGALWARREHLHIMPPFLGGGEMIKEVSFDGTLFNTPPHKFEAGTPNIAGFIGLRAAVDYVRRIGIEQIETRETELLAHLTEELQKIDGMRLFGTAPNKAAVVSFMIEGTHAHDLATLLDLEGVAIRSGQHCAHPLLQYYGVTATCRASLAFYNTHEEIERFIAALLKVRKLLG.

Lysine 236 is subject to N6-(pyridoxal phosphate)lysine. The active-site Cysteine persulfide intermediate is the cysteine 374.

This sequence belongs to the class-V pyridoxal-phosphate-dependent aminotransferase family. Csd subfamily. Requires pyridoxal 5'-phosphate as cofactor.

It catalyses the reaction (sulfur carrier)-H + L-cysteine = (sulfur carrier)-SH + L-alanine. Functionally, catalyzes the removal of elemental sulfur and selenium atoms from L-cysteine, L-cystine, L-selenocysteine, and L-selenocystine to produce L-alanine. This Xylella fastidiosa (strain 9a5c) protein is Probable cysteine desulfurase (csd).